The sequence spans 174 residues: CASP-like protein 1 (174 aa).

The interval 1 to 25 is disordered; the sequence is MDSKSGRSESAINIPESNSTKHKST. The Cytoplasmic segment spans residues 1–46; it reads MDSKSGRSESAINIPESNSTKHKSTAVHTATKVAAVAPRGGGWRRG. Over residues 8-18 the composition is skewed to polar residues; that stretch reads SESAINIPESN. Residues 47-67 form a helical membrane-spanning segment; that stretch reads VSIFDFILRICALAAALAATA. Residues 68-96 lie on the Extracellular side of the membrane; sequence TMGTTDQTLPFFTQIIQFQASYDDLPVFT. A helical membrane pass occupies residues 97-117; it reads FFVVANGIASGYLVLSLPFSI. Residues 118-119 lie on the Cytoplasmic side of the membrane; sequence AT. Residues 120–139 traverse the membrane as a helical segment; it reads IVRPHAAAIKLLLIIFDTQF. At 140 to 150 the chain is on the extracellular side; sequence NDFCQRVSGAV. The chain crosses the membrane as a helical span at residues 151-171; that stretch reads VASFVAAVILIFLVVLSAVAI. Residues 172-174 lie on the Cytoplasmic side of the membrane; it reads RKH.

This sequence belongs to the Casparian strip membrane proteins (CASP) family. In terms of assembly, homodimer and heterodimers.

It localises to the cell membrane. This is CASP-like protein 1 from Triphysaria pusilla (Dwarf owl's-clover).